A 186-amino-acid chain; its full sequence is Adenine phosphoribosyltransferase (186 aa).

This sequence belongs to the purine/pyrimidine phosphoribosyltransferase family. In terms of assembly, homodimer.

It localises to the cytoplasm. It carries out the reaction AMP + diphosphate = 5-phospho-alpha-D-ribose 1-diphosphate + adenine. Its pathway is purine metabolism; AMP biosynthesis via salvage pathway; AMP from adenine: step 1/1. Catalyzes a salvage reaction resulting in the formation of AMP, that is energically less costly than de novo synthesis. The polypeptide is Adenine phosphoribosyltransferase (Xanthomonas axonopodis pv. citri (strain 306)).